Consider the following 296-residue polypeptide: 4-hydroxybenzoate octaprenyltransferase (296 aa).

The next 8 membrane-spanning stretches (helical) occupy residues 28-48 (PIGIYLLLWPTLWALWIAGKG), 52-72 (LANIVIFVLGVVLTRAGGCVI), 102-122 (ALVFFALLMGVSFLLVLCTNA), 146-166 (YYPQVVLGAAFSWGMPMAFTA), 169-189 (GELPATAWLLWIANLLWTVGY), 219-239 (VIILTLQVLSLGCLVLAGSKF), 241-261 (LGMWFHLGLLVAAGCYAWEFW), and 275-295 (FLHNHWAGLAIFVGIVLDYAL).

Belongs to the UbiA prenyltransferase family. Requires Mg(2+) as cofactor.

It is found in the cell inner membrane. The catalysed reaction is all-trans-octaprenyl diphosphate + 4-hydroxybenzoate = 4-hydroxy-3-(all-trans-octaprenyl)benzoate + diphosphate. It participates in cofactor biosynthesis; ubiquinone biosynthesis. Functionally, catalyzes the prenylation of para-hydroxybenzoate (PHB) with an all-trans polyprenyl group. Mediates the second step in the final reaction sequence of ubiquinone-8 (UQ-8) biosynthesis, which is the condensation of the polyisoprenoid side chain with PHB, generating the first membrane-bound Q intermediate 3-octaprenyl-4-hydroxybenzoate. The protein is 4-hydroxybenzoate octaprenyltransferase of Pseudomonas fluorescens (strain Pf0-1).